A 244-amino-acid chain; its full sequence is MGLELFLDLVSQPSRAVYIFAKKNGIPLELRTVDLVKGQHKSKEFLQINSLGKLPTLKDGDFILTESSAILIYLSCKYQTPDHWYPSDLQARARVHEYLGWHADCIRGTFGIPLWVQVLGPLIGVQVPEEKVERNRTAMDQALQWLEDKFLGDRPFLAGQQVTLADLMALEELMQPVALGYELFEGRPRLAAWRGRVEAFLGAELCQEAHSIILSILEQAAKKTLPTPSPEAYQAMLLRIARIP.

In terms of domain architecture, GST N-terminal spans 2-82; that stretch reads GLELFLDLVS…YLSCKYQTPD (81 aa). Glutathione-binding positions include 40-41, 53-54, 66-67, and 104-107; these read HK, KL, ES, and DCIR. The 137-residue stretch at 88 to 224 folds into the GST C-terminal domain; it reads DLQARARVHE…SILEQAAKKT (137 aa).

Belongs to the GST superfamily. Theta family. In terms of assembly, homodimer. Expressed at low levels in liver. In lung, expressed at low levels in ciliated bronchiolar cells, alveolar macrophages and alveolar type II cells.

The protein resides in the cytoplasm. Its subcellular location is the cytosol. It carries out the reaction RX + glutathione = an S-substituted glutathione + a halide anion + H(+). Conjugation of reduced glutathione to a wide number of exogenous and endogenous hydrophobic electrophiles. Has a sulfatase activity. The protein is Glutathione S-transferase theta-2B (GSTT2B) of Homo sapiens (Human).